A 400-amino-acid chain; its full sequence is Argininosuccinate synthase (400 aa).

8–16 (AYSGGLDTS) lines the ATP pocket. Tyr-85 serves as a coordination point for L-citrulline. Gly-115 contributes to the ATP binding site. L-aspartate is bound by residues Thr-117, Asn-121, and Asp-122. Asn-121 is a binding site for L-citrulline. L-citrulline contacts are provided by Arg-125, Ser-173, Glu-258, and Tyr-270.

This sequence belongs to the argininosuccinate synthase family. Type 1 subfamily. As to quaternary structure, homotetramer.

It is found in the cytoplasm. The catalysed reaction is L-citrulline + L-aspartate + ATP = 2-(N(omega)-L-arginino)succinate + AMP + diphosphate + H(+). It functions in the pathway amino-acid biosynthesis; L-arginine biosynthesis; L-arginine from L-ornithine and carbamoyl phosphate: step 2/3. This Staphylococcus haemolyticus (strain JCSC1435) protein is Argininosuccinate synthase.